The sequence spans 213 residues: Phospho-2-dehydro-3-deoxyheptonate aldolase, Tyr-sensitive (213 aa).

It belongs to the class-I DAHP synthase family.

It catalyses the reaction D-erythrose 4-phosphate + phosphoenolpyruvate + H2O = 7-phospho-2-dehydro-3-deoxy-D-arabino-heptonate + phosphate. It functions in the pathway metabolic intermediate biosynthesis; chorismate biosynthesis; chorismate from D-erythrose 4-phosphate and phosphoenolpyruvate: step 1/7. In terms of biological role, stereospecific condensation of phosphoenolpyruvate (PEP) and D-erythrose-4-phosphate (E4P) giving rise to 3-deoxy-D-arabino-heptulosonate-7-phosphate (DAHP). The protein is Phospho-2-dehydro-3-deoxyheptonate aldolase, Tyr-sensitive (aroF) of Enterobacter agglomerans (Erwinia herbicola).